A 154-amino-acid chain; its full sequence is Interleukin-2 (154 aa).

A signal peptide spans 1 to 20 (MYKLQLLSCIALTLALVANS). The O-linked (GalNAc...) threonine glycan is linked to Thr-23. A disulfide bond links Cys-78 and Cys-126.

It belongs to the IL-2 family.

It localises to the secreted. Its function is as follows. Cytokine produced by activated CD4-positive helper T-cells and to a lesser extend activated CD8-positive T-cells and natural killer (NK) cells that plays pivotal roles in the immune response and tolerance. Binds to a receptor complex composed of either the high-affinity trimeric IL-2R (IL2RA/CD25, IL2RB/CD122 and IL2RG/CD132) or the low-affinity dimeric IL-2R (IL2RB and IL2RG). Interaction with the receptor leads to oligomerization and conformation changes in the IL-2R subunits resulting in downstream signaling starting with phosphorylation of JAK1 and JAK3. In turn, JAK1 and JAK3 phosphorylate the receptor to form a docking site leading to the phosphorylation of several substrates including STAT5. This process leads to activation of several pathways including STAT, phosphoinositide-3-kinase/PI3K and mitogen-activated protein kinase/MAPK pathways. Functions as a T-cell growth factor and can increase NK-cell cytolytic activity as well. Promotes strong proliferation of activated B-cells and subsequently immunoglobulin production. Plays a pivotal role in regulating the adaptive immune system by controlling the survival and proliferation of regulatory T-cells, which are required for the maintenance of immune tolerance. Moreover, participates in the differentiation and homeostasis of effector T-cell subsets, including Th1, Th2, Th17 as well as memory CD8-positive T-cells. In Lama glama (Llama), this protein is Interleukin-2 (IL2).